Consider the following 115-residue polypeptide: Large ribosomal subunit protein uL24 (115 aa).

Belongs to the universal ribosomal protein uL24 family. As to quaternary structure, part of the 50S ribosomal subunit.

In terms of biological role, one of two assembly initiator proteins, it binds directly to the 5'-end of the 23S rRNA, where it nucleates assembly of the 50S subunit. One of the proteins that surrounds the polypeptide exit tunnel on the outside of the subunit. The polypeptide is Large ribosomal subunit protein uL24 (Phytoplasma mali (strain AT)).